The primary structure comprises 454 residues: Growth/differentiation factor 9 (454 aa).

A signal peptide spans 1–24 (MARPNKFLLWFCCFAWLCFPISLG). The propeptide occupies 25 to 319 (SQASGGEAQI…GRSSHHRHRR (295 aa)). Residues Asn106, Asn163, Asn236, Asn255, and Asn268 are each glycosylated (N-linked (GlcNAc...) asparagine). Residues 303-330 (GEEAAEDGRSSHHRHRRGQETVSSELKK) form a disordered region. Position 325 is a phosphoserine; by CK (Ser325). Asn338 is a glycosylation site (N-linked (GlcNAc...) asparagine). Disulfide bonds link Cys353-Cys419, Cys382-Cys451, and Cys386-Cys453.

This sequence belongs to the TGF-beta family. Homodimer or heterodimer (Potential). But, in contrast to other members of this family, cannot be disulfide-linked. Post-translationally, phosphorylated; phosphorylation is critical for GDF9 function. In vitro, can be phosphorylated by CK at Ser-325. Expressed in ovarian granulosa cells. Present in oocytes of primary follicles (at protein level).

It is found in the secreted. Functionally, required for ovarian folliculogenesis. Promotes primordial follicle development. Stimulates granulosa cell proliferation. Promotes cell transition from G0/G1 to S and G2/M phases, through an increase of CCND1 and CCNE1 expression, and RB1 phosphorylation. It regulates STAR expression and cAMP-dependent progesterone release in granulosa and thecal cells. Attenuates the suppressive effects of activin A on STAR expression and progesterone production by increasing the expression of inhibin B. It suppresses FST and FSTL3 production in granulosa-lutein cells. The sequence is that of Growth/differentiation factor 9 (GDF9) from Homo sapiens (Human).